Consider the following 238-residue polypeptide: Ribosomal RNA small subunit methyltransferase G (238 aa).

S-adenosyl-L-methionine-binding positions include Gly-106, Leu-111, 157–158 (IE), and Arg-170.

Belongs to the methyltransferase superfamily. RNA methyltransferase RsmG family.

The protein resides in the cytoplasm. The enzyme catalyses guanosine(527) in 16S rRNA + S-adenosyl-L-methionine = N(7)-methylguanosine(527) in 16S rRNA + S-adenosyl-L-homocysteine. Functionally, specifically methylates the N7 position of guanine in position 527 of 16S rRNA. The chain is Ribosomal RNA small subunit methyltransferase G from Psychrobacter cryohalolentis (strain ATCC BAA-1226 / DSM 17306 / VKM B-2378 / K5).